We begin with the raw amino-acid sequence, 961 residues long: RNA polymerase II subunit A C-terminal domain phosphatase (961 aa).

N-acetylmethionine is present on Met-1. The FCP1 homology domain occupies 178–344 (HRNRKLVLMV…SRESQTRKKV (167 aa)). Residues 328 to 589 (DMNAPPGSRE…EEEDTDEDDH (262 aa)) are disordered. Residues 394–406 (DSPRPGKPDERDI) are compositionally biased toward basic and acidic residues. Residue Ser-395 is modified to Phosphoserine. Residues 450-462 (LDFDLSSDSESSS) show a composition bias toward acidic residues. Residues 463-475 (ESEGTKSSSSASD) are compositionally biased toward low complexity. Acidic residues predominate over residues 575–588 (SMEEEEEEDTDEDD). Residues 629-728 (LKSKVLADVA…DKVEEQLFPL (100 aa)) enclose the BRCT domain. Phosphoserine is present on residues Ser-674 and Ser-740. Disordered stretches follow at residues 730–752 (DDHT…GVPP) and 780–949 (KLIR…ADEM). At Lys-780 the chain carries N6-acetyllysine. Residues 793–803 (SSSLPIRQEPS) are compositionally biased toward polar residues. Phosphoserine is present on Ser-839. Over residues 850–859 (CKEDLESMDK) the composition is skewed to basic and acidic residues. Acidic residues-rich tracts occupy residues 860-873 (EVDD…DDSD) and 937-947 (NEDEGSSSEAD). Residues Ser-869 and Ser-872 each carry the phosphoserine modification.

In terms of assembly, homodimer. Interacts with GTF2F1. Interacts with WDR77, SNRPB and SNRNP70. Phosphorylated. In the presence of TFIIF, the phosphorylated form has an increased CTD phosphatase activity. The phosphorylation is required for the physical interaction with GTF2F1. As to expression, ubiquitously expressed.

Its subcellular location is the nucleus. It is found in the cytoplasm. The protein resides in the cytoskeleton. It localises to the microtubule organizing center. The protein localises to the centrosome. Its subcellular location is the spindle pole. It is found in the midbody. It catalyses the reaction O-phospho-L-seryl-[protein] + H2O = L-seryl-[protein] + phosphate. The enzyme catalyses O-phospho-L-threonyl-[protein] + H2O = L-threonyl-[protein] + phosphate. Processively dephosphorylates 'Ser-2' and 'Ser-5' of the heptad repeats YSPTSPS in the C-terminal domain of the largest RNA polymerase II subunit. This promotes the activity of RNA polymerase II. Plays a role in the exit from mitosis by dephosphorylating crucial mitotic substrates (USP44, CDC20 and WEE1) that are required for M-phase-promoting factor (MPF)/CDK1 inactivation. The chain is RNA polymerase II subunit A C-terminal domain phosphatase (CTDP1) from Homo sapiens (Human).